The following is a 48-amino-acid chain: Large ribosomal subunit protein bL34c (48 aa).

The interval 18–48 is disordered; that stretch reads SGFRSRMATPQGRKTIRNRRKKGRKNLTLRR. The segment covering 31–48 has biased composition (basic residues); that stretch reads KTIRNRRKKGRKNLTLRR.

The protein belongs to the bacterial ribosomal protein bL34 family.

The protein localises to the plastid. It localises to the chloroplast. This Phaeodactylum tricornutum (strain CCAP 1055/1) protein is Large ribosomal subunit protein bL34c.